The sequence spans 251 residues: Precorrin-4 C(11)-methyltransferase (251 aa).

The protein belongs to the precorrin methyltransferase family.

The catalysed reaction is precorrin-4 + S-adenosyl-L-methionine = precorrin-5 + S-adenosyl-L-homocysteine. It participates in cofactor biosynthesis; adenosylcobalamin biosynthesis; cob(II)yrinate a,c-diamide from precorrin-2 (aerobic route): step 4/10. In terms of biological role, catalyzes the methylation of C-11 in precorrin-4 to form precorrin-5. The sequence is that of Precorrin-4 C(11)-methyltransferase (cobM) from Mycobacterium tuberculosis (strain CDC 1551 / Oshkosh).